A 678-amino-acid polypeptide reads, in one-letter code: Protein distal antenna (678 aa).

Residues T7–L58 enclose the HTH psq-type domain. Residues K34–N54 constitute a DNA-binding region (H-T-H motif). Disordered stretches follow at residues G232 to M310, G344 to S381, K445 to C528, G541 to E592, and N645 to K678. 2 stretches are compositionally biased toward polar residues: residues P241 to S254 and P349 to Q363. 2 positions are modified to phosphoserine: S251 and S254. The span at L372–S381 shows a compositional bias: low complexity. Polar residues predominate over residues T449–N461. A compositionally biased stretch (acidic residues) spans P462–P478. A compositionally biased stretch (polar residues) spans T495–R508. A compositionally biased stretch (low complexity) spans N570–N586. Over residues E657 to E667 the composition is skewed to acidic residues.

In terms of assembly, homomers. Interacts with itself, danr, ey and dac to form a complex (or complexes) containing the RD factors. In terms of tissue distribution, coexpressed with danr in the presumptive distal antenna, but not in the leg imaginal disk. Both proteins are also expressed in the brain and the eye region of the eye-antenna disk. First detected in early L3 eye disks in cells surrounding the newly initiated MF. Levels are uniform and high anterior to the furrow, lower levels within and posterior to the furrow. Limited expression is seen in small groups of cells in leg and wing. These appear in the location of prominent sense organ progenitors at relatively late stages of disk development.

The protein resides in the nucleus. Its function is as follows. Probable transcription factor with a role in the retinal determination (RD) network. Regulates ato expression and is required for normal R8 induction and differentiation. Danr appears to repress Dan expression, but Dan is required for Danr expression anterior to the morphogenetic furrow (MF). Dan and Danr lie downstream of so and require dac function for highest levels of expression. Contributes to differentiation of antenna-specific characteristics; effector gene that acts downstream of homothorax (hth), Distal-less (Dll), cut (ct) and spineless (ss) genes to control differentiation of distal antennal structures. The protein is Protein distal antenna of Drosophila melanogaster (Fruit fly).